The chain runs to 471 residues: Ribulose bisphosphate carboxylase large chain (471 aa).

Substrate-binding residues include asparagine 115 and threonine 165. Lysine 167 acts as the Proton acceptor in catalysis. Lysine 169 provides a ligand contact to substrate. The Mg(2+) site is built by lysine 193, aspartate 195, and glutamate 196. Lysine 193 is modified (N6-carboxylysine). Histidine 286 serves as the catalytic Proton acceptor. Substrate-binding residues include arginine 287, histidine 319, and serine 371.

The protein belongs to the RuBisCO large chain family. Type I subfamily. As to quaternary structure, heterohexadecamer of 8 large chains and 8 small chains. Mg(2+) is required as a cofactor.

Its subcellular location is the carboxysome. The enzyme catalyses 2 (2R)-3-phosphoglycerate + 2 H(+) = D-ribulose 1,5-bisphosphate + CO2 + H2O. The catalysed reaction is D-ribulose 1,5-bisphosphate + O2 = 2-phosphoglycolate + (2R)-3-phosphoglycerate + 2 H(+). In terms of biological role, ruBisCO catalyzes two reactions: the carboxylation of D-ribulose 1,5-bisphosphate, the primary event in carbon dioxide fixation, as well as the oxidative fragmentation of the pentose substrate in the photorespiration process. Both reactions occur simultaneously and in competition at the same active site. This chain is Ribulose bisphosphate carboxylase large chain, found in Synechococcus sp. (strain RCC307).